The chain runs to 381 residues: MASSTQGQVITCKAAVAWEANRPMTIEDVQVAPPQAGEVRVKILFTALCHTDHYTWSGKDPEGLFPCILGHEAAGIVESVGEGVTEVQPGDHVIPCYQAECRECKFCKSGKTNLCGKVRAATGVGVMMNDRKSRFSINGKPIYHFMGTSTFSQYTVVHDVSVAKINPQAPLDKVCLLGCGVSTGLGAVWNTAKVEAGSIVAIFGLGTVGLAVAEGAKSAGASRIIGIDIDSKKFDVAKNFGVTEFVNPKDHDKPIQQVIVDLTDGGVDYSFECIGNVSVMRSALECCHKGWGTSVIVGVAASGQEISTRPFQLVTGRVWKGTAFGGFKSRSQVPWLVEKYLNKEIKVDEYVTHSMNLTDINKAFDLLHEGGCLRCVLATDK.

A Zn(2+)-binding site is contributed by Cys49. His50 provides a ligand contact to NAD(+). Positions 51 and 71 each coordinate an alcohol. His71, Glu72, Cys101, Cys104, Cys107, Cys115, and Cys179 together coordinate Zn(2+). NAD(+)-binding positions include 204 to 209 (GLGTVG), Asp228, Lys233, Ile274, 297 to 299 (VGV), 322 to 324 (TAF), and Arg374.

Belongs to the zinc-containing alcohol dehydrogenase family. Class-III subfamily. In terms of assembly, homodimer. Zn(2+) serves as cofactor.

It localises to the cytoplasm. The enzyme catalyses a primary alcohol + NAD(+) = an aldehyde + NADH + H(+). It carries out the reaction a secondary alcohol + NAD(+) = a ketone + NADH + H(+). The catalysed reaction is S-(hydroxymethyl)glutathione + NADP(+) = S-formylglutathione + NADPH + H(+). It catalyses the reaction S-(hydroxymethyl)glutathione + NAD(+) = S-formylglutathione + NADH + H(+). The sequence is that of Alcohol dehydrogenase class-3 from Oryza sativa subsp. japonica (Rice).